An 86-amino-acid polypeptide reads, in one-letter code: Small nuclear ribonucleoprotein F (86 aa).

Residues 14–86 form the Sm domain; the sequence is NPKPFLKGLV…NVLYIRELPN (73 aa).

The protein belongs to the snRNP Sm proteins family. SmF/LSm6 subfamily. In terms of assembly, component of the Sm core complex, present in spliceosomal snRNP U1, U2, U4/U6 and U5. The core complex contains SMB1, SMD1, SMD2, SMD3, SME1, SMX3 and SMX2 (Sm proteins B, D1, D2, D3, E, F and G, respectively), and is probably a heptameric ring structure. SMX3 specifically interacts with SME1. Belongs to the CWC complex (or CEF1-associated complex), a spliceosome sub-complex reminiscent of a late-stage spliceosome composed of the U2, U5 and U6 snRNAs and at least BUD13, BUD31, BRR2, CDC40, CEF1, CLF1, CUS1, CWC2, CWC15, CWC21, CWC22, CWC23, CWC24, CWC25, CWC27, ECM2, HSH155, IST3, ISY1, LEA1, MSL1, NTC20, PRP8, PRP9, PRP11, PRP19, PRP21, PRP22, PRP45, PRP46, SLU7, SMB1, SMD1, SMD2, SMD3, SMX2, SMX3, SNT309, SNU114, SPP2, SYF1, SYF2, RSE1 and YJU2. Component of the U4/U6-U5 tri-snRNP complex composed of the U4, U6 and U5 snRNAs and at least PRP3, PRP4, PRP6, PRP8, PRP18, PRP31, PRP38, SNU13, SNU23, SNU66, SNU114, SPP381, SMB1, SMD1, SMD2, SMD3, SMX2, SMX3, LSM2, LSM3, LSM4, LSM5, LSM6, LSM7, LSM8, BRR2 and DIB1.

It localises to the nucleus. Its subcellular location is the cytoplasm. Plays a role in pre-mRNA splicing as a core component of the spliceosomal U1, U2, U4 and U5 small nuclear ribonucleoproteins (snRNPs), the building blocks of the spliceosome. The polypeptide is Small nuclear ribonucleoprotein F (SMX3) (Saccharomyces cerevisiae (strain ATCC 204508 / S288c) (Baker's yeast)).